Reading from the N-terminus, the 607-residue chain is Chaperone protein HtpG (607 aa).

The interval 1 to 323 (MKKEEKIFKA…CDSLSLNISR (323 aa)) is a; substrate-binding. Residues 324–534 (EILQQNAELQ…KGGLSLEMEK (211 aa)) are b. The tract at residues 535-607 (TLSEMTNNND…FIKNLNSLIK (73 aa)) is c.

Belongs to the heat shock protein 90 family. Homodimer.

It localises to the cytoplasm. Functionally, molecular chaperone. Has ATPase activity. The protein is Chaperone protein HtpG of Fusobacterium nucleatum subsp. nucleatum (strain ATCC 25586 / DSM 15643 / BCRC 10681 / CIP 101130 / JCM 8532 / KCTC 2640 / LMG 13131 / VPI 4355).